Reading from the N-terminus, the 166-residue chain is Thiol peroxidase (166 aa).

The region spanning L18–K166 is the Thioredoxin domain. The active-site Cysteine sulfenic acid (-SOH) intermediate is the C60. Residues C60 and C94 are joined by a disulfide bond.

This sequence belongs to the peroxiredoxin family. Tpx subfamily. Homodimer.

The catalysed reaction is a hydroperoxide + [thioredoxin]-dithiol = an alcohol + [thioredoxin]-disulfide + H2O. In terms of biological role, thiol-specific peroxidase that catalyzes the reduction of hydrogen peroxide and organic hydroperoxides to water and alcohols, respectively. Plays a role in cell protection against oxidative stress by detoxifying peroxides. This is Thiol peroxidase from Helicobacter pylori (strain J99 / ATCC 700824) (Campylobacter pylori J99).